The chain runs to 135 residues: DNA-binding protein H-NS homolog (135 aa).

The DNA-binding element occupies 112–117 (QGRTPS).

Belongs to the histone-like protein H-NS family. In terms of assembly, homodimer that oligomerizes on DNA into higher-order complexes that form bridges between disparate regions of DNA compacting it.

It is found in the cytoplasm. It localises to the nucleoid. In terms of biological role, a DNA-binding protein implicated in transcriptional repression and chromosome organization and compaction. Binds nucleation sites in AT-rich DNA and bridges them, forming higher-order nucleoprotein complexes and condensing the chromosome. A subset of genes are repressed by H-NS in association with other proteins. This is DNA-binding protein H-NS homolog (hns) from Buchnera aphidicola subsp. Acyrthosiphon pisum (strain APS) (Acyrthosiphon pisum symbiotic bacterium).